The primary structure comprises 211 residues: Transcription factor E (211 aa).

Positions 10–130 (GNPAIYQYLL…LWLMRMDHMN (121 aa)) constitute an HTH TFE/IIEalpha-type domain.

The protein belongs to the TFE family. Monomer. Interaction with RNA polymerase subunits RpoF and RpoE is necessary for Tfe stimulatory transcription activity. Able to interact with Tbp and RNA polymerase in the absence of DNA promoter. Interacts both with the preinitiation and elongation complexes.

Transcription factor that plays a role in the activation of archaeal genes transcribed by RNA polymerase. Facilitates transcription initiation by enhancing TATA-box recognition by TATA-box-binding protein (Tbp), and transcription factor B (Tfb) and RNA polymerase recruitment. Not absolutely required for transcription in vitro, but particularly important in cases where Tbp or Tfb function is not optimal. It dynamically alters the nucleic acid-binding properties of RNA polymerases by stabilizing the initiation complex and destabilizing elongation complexes. Seems to translocate with the RNA polymerase following initiation and acts by binding to the non template strand of the transcription bubble in elongation complexes. The chain is Transcription factor E from Methanocorpusculum labreanum (strain ATCC 43576 / DSM 4855 / Z).